The sequence spans 342 residues: N-acetyl-gamma-glutamyl-phosphate reductase (342 aa).

C149 is an active-site residue.

Belongs to the NAGSA dehydrogenase family. Type 1 subfamily.

The protein localises to the cytoplasm. The catalysed reaction is N-acetyl-L-glutamate 5-semialdehyde + phosphate + NADP(+) = N-acetyl-L-glutamyl 5-phosphate + NADPH + H(+). It functions in the pathway amino-acid biosynthesis; L-arginine biosynthesis; N(2)-acetyl-L-ornithine from L-glutamate: step 3/4. Catalyzes the NADPH-dependent reduction of N-acetyl-5-glutamyl phosphate to yield N-acetyl-L-glutamate 5-semialdehyde. The protein is N-acetyl-gamma-glutamyl-phosphate reductase of Cereibacter sphaeroides (strain ATCC 17023 / DSM 158 / JCM 6121 / CCUG 31486 / LMG 2827 / NBRC 12203 / NCIMB 8253 / ATH 2.4.1.) (Rhodobacter sphaeroides).